We begin with the raw amino-acid sequence, 243 residues long: Small ribosomal subunit protein uS2 (243 aa).

It belongs to the universal ribosomal protein uS2 family.

The polypeptide is Small ribosomal subunit protein uS2 (Aliivibrio salmonicida (strain LFI1238) (Vibrio salmonicida (strain LFI1238))).